An 867-amino-acid chain; its full sequence is Protein argonaute-3 (867 aa).

The necessary and sufficient for interaction with krimp stretch occupies residues 1–83 (MSGRGNLLSL…IDTLKTDDHT (83 aa)). The segment at 1 to 289 (MSGRGNLLSL…CDVSHRILCQ (289 aa)) is interaction with papi. Symmetric dimethylarginine is present on residues Arg4, Arg68, and Arg70. Residues 291 to 402 (TVLEMLVDLY…LIPELCYLTG (112 aa)) enclose the PAZ domain. A Piwi domain is found at 566–853 (MVVCICHNRR…LAYLIGQSIQ (288 aa)).

It belongs to the argonaute family. Piwi subfamily. Component of the ping-pong piRNA processing (4P) complex consisting of krimp, aub and AGO3. Interacts (via N-terminus when not methylated on arginine residues) with krimp (via non-canonical tudor domain); this interaction leads to symmetrical dimethylation on AGO3 arginine residues and its subsequent dissociation from krimp. Krimp associated AGO3 is mostly free of piRNA binding and the interaction plays an important role in the loading of AGO3 with piRNAs; piRNA binding may stimulate dissociation of the two proteins. May form part of a piRNA processing complex consisting of tud, aub and AGO3. Interacts (when symmetrically dimethylated on arginine residues) with tud. Forms a complex with smg, twin, aub, nos mRNA and piRNAs that target the nos 3'-untranslated region, in early embryos. Interacts (via the N-terminal region when symmetrically methylated on arginine residues) with papi (via C-terminus); this interaction is RNA-independent and may be required for AGO3 localization to the nuage. Interacts with TER94 and tral. Post-translationally, symmetrically dimethylated on Arg-4, Arg-68 and Arg-70, most likely by csul/PRMT5/DART5. Methylation state probably functions as an indicator of its piRNA binding state. In terms of tissue distribution, in ovary, expressed in germline stem cells, germline cyst cells, nurse cells and oocytes during early stages. Also found in the somatic cap cells of the germarium. In testis, expressed in germline stem cells, primary gonial cells and early spermatocytes. No expression detected in the somatic hub cells at the apical tip of the testis (at protein level). Expressed in neurons throughout the adult brain and in the mushroom body subdivision in the peduncle. In the mushroom body, expressed only in gamma and core alpha-beta neurons.

It is found in the cytoplasm. It localises to the perinuclear region. The protein localises to the cytoplasmic ribonucleoprotein granule. In terms of biological role, component of the perinuclear meiotic nuage, a germline-specific subcellular membraneless ribonucleoprotein compartment involved in production of transposable element-repressing Piwi-interacting RNA (piRNA)-induced silencing complexes (piRISCs), which are essential for maintaining germline integrity during oogenesis. Acts via the Piwi-interacting RNA (piRNA) metabolic process, which mediates the repression of transposable elements during meiosis by forming complexes composed of piRNAs and Piwi proteins and governs the methylation and subsequent repression of transposons. Piwi protein that directly binds piRNAs, a class of 24 to 30 nucleotide RNAs that are generated by a Dicer-independent mechanism and are primarily derived from transposons and other repeated sequence elements. Associates predominantly with sense piRNAs that contain adenine at nucleotide 10, but shows no preference for uridine at the 5' end. Shows RNA cleavage or slicer activity. Together with Piwi protein aub recruited to subregions of the perinuclear nuage by krimp, which coordinates their activity in the ping-pong amplification step of secondary piRNA biogenesis. Krimp recruits piRNA bound aub and unbound AGO3, bringing them into close proximity to facilitate the loading onto AGO3 of freshly cut piRNAs generated by aub cleavage of target sequences; krimp recognizes the piRNA loading state of the Piwi proteins via symmetrically dimethylated arginine modification in their N-terminus. Important for asymmetric ping-pong amplification to bias production towards antisense piRNAs capable of silencing transposable elements. In testis, associates with Su(Ste) and AT-chX-1 piRNAs mostly produced from antisense precursors. In the germline, acts to amplify pools of antisense piRNAs, among others Su(Ste), AT-chX-1 and roo, and to limit sense piRNA accumulation. Forms a complex with smg, twin, aub and specific piRNAs that targets nos mRNA (and probably other maternal mRNAS) for deadenylation promoting its decay during early embryogenesis. Involved in transposon silencing in the adult brain. This chain is Protein argonaute-3, found in Drosophila melanogaster (Fruit fly).